Consider the following 503-residue polypeptide: Probable cytosol aminopeptidase (503 aa).

Residues Lys-274 and Asp-279 each contribute to the Mn(2+) site. Lys-286 is a catalytic residue. Asp-297, Asp-356, and Glu-358 together coordinate Mn(2+). Arg-360 is an active-site residue.

It belongs to the peptidase M17 family. Mn(2+) serves as cofactor.

It localises to the cytoplasm. It catalyses the reaction Release of an N-terminal amino acid, Xaa-|-Yaa-, in which Xaa is preferably Leu, but may be other amino acids including Pro although not Arg or Lys, and Yaa may be Pro. Amino acid amides and methyl esters are also readily hydrolyzed, but rates on arylamides are exceedingly low.. The enzyme catalyses Release of an N-terminal amino acid, preferentially leucine, but not glutamic or aspartic acids.. In terms of biological role, presumably involved in the processing and regular turnover of intracellular proteins. Catalyzes the removal of unsubstituted N-terminal amino acids from various peptides. This chain is Probable cytosol aminopeptidase, found in Burkholderia pseudomallei (strain 1710b).